The following is a 436-amino-acid chain: T-box transcription factor TBX6 (436 aa).

The segment at residues 100 to 273 (LWKEFSAVGT…ANPFAKGFRE (174 aa)) is a DNA-binding region (T-box). A compositionally biased stretch (basic and acidic residues) spans 274–284 (NGRNCKRERDA). Disordered regions lie at residues 274–344 (NGRN…CGGP) and 360–383 (PSHLPARTPSFAEAPDPGRPAPYS). Residues 332-344 (EAASASAPPCGGP) show a composition bias toward low complexity.

Its subcellular location is the nucleus. Functionally, T-box transcription factor that plays an essential role in the determination of the fate of axial stem cells: neural vs mesodermal. Acts in part by down-regulating, a specific enhancer (N1) of SOX2, to inhibit neural development. Seems to play also an essential role in left/right axis determination and acts through effects on Notch signaling around the node as well as through an effect on the morphology and motility of the nodal cilia. This is T-box transcription factor TBX6 (Tbx6) from Mus musculus (Mouse).